The primary structure comprises 1010 residues: Probable LRR receptor-like serine/threonine-protein kinase At3g47570 (1010 aa).

An N-terminal signal peptide occupies residues 1 to 19 (MRLFLLLAFNALMLLETHG). Residues 20 to 645 (FTDETDRQAL…SSRLKKVVIG (626 aa)) are Extracellular-facing. N-linked (GlcNAc...) asparagine glycosylation is found at Asn48 and Asn88. LRR repeat units lie at residues 89–113 (LSFL…VGQL), 114–137 (SRLE…LYNC), 139–161 (RLLN…LGSL), 162–185 (TNLV…LGNL), 186–209 (TLLE…VAQL), 211–233 (QIWS…LYNL), 234–258 (SSLK…GILL), 259–282 (PNLL…LSNI), 283–307 (STLE…NVPN), and 310–333 (LLFL…TSLT). The N-linked (GlcNAc...) asparagine glycan is linked to Asn136. The N-linked (GlcNAc...) asparagine glycan is linked to Asn184. Asn221 and Asn232 each carry an N-linked (GlcNAc...) asparagine glycan. N-linked (GlcNAc...) asparagine glycans are attached at residues Asn281 and Asn294. 2 N-linked (GlcNAc...) asparagine glycosylation sites follow: Asn334 and Asn358. LRR repeat units lie at residues 335–359 (CTQL…IANL), 361–384 (AKLV…IGNL), 385–408 (INLQ…LGKL), 410–432 (NLRY…IGNM), 433–455 (TMLE…SLGN), 457–480 (SHLL…IMKI), 481–504 (QQLL…IGAL), 505–528 (QNLG…LGNC), 530–551 (TMES…LKGL), 552–574 (VGVK…YFAS), and 575–600 (FSKL…IFEN). N-linked (GlcNAc...) asparagine glycans are attached at residues Asn431, Asn455, and Asn470. N-linked (GlcNAc...) asparagine glycosylation is found at Asn582 and Asn600. Residues 646 to 666 (VSVGITLLLLLFMASVTLIWL) traverse the membrane as a helical segment. Topologically, residues 667-1010 (RKRKKNKETN…FFKASRTTWR (344 aa)) are cytoplasmic. At Thr699 the chain carries Phosphothreonine. Residues 702–1002 (FSSSNMVGSG…ELISIRERFF (301 aa)) form the Protein kinase domain. ATP is bound by residues 708–716 (VGSGSFGTV) and Lys731. Phosphotyrosine is present on residues Tyr781 and Tyr826. Asp839 acts as the Proton acceptor in catalysis. Residue Tyr887 is modified to Phosphotyrosine.

Belongs to the protein kinase superfamily. Ser/Thr protein kinase family.

The protein resides in the cell membrane. The catalysed reaction is L-seryl-[protein] + ATP = O-phospho-L-seryl-[protein] + ADP + H(+). The enzyme catalyses L-threonyl-[protein] + ATP = O-phospho-L-threonyl-[protein] + ADP + H(+). The sequence is that of Probable LRR receptor-like serine/threonine-protein kinase At3g47570 from Arabidopsis thaliana (Mouse-ear cress).